Reading from the N-terminus, the 310-residue chain is Acetylglutamate kinase (310 aa).

Residues 76–77 (GG), arginine 98, and asparagine 203 each bind substrate.

It belongs to the acetylglutamate kinase family. ArgB subfamily.

The protein localises to the cytoplasm. The catalysed reaction is N-acetyl-L-glutamate + ATP = N-acetyl-L-glutamyl 5-phosphate + ADP. The protein operates within amino-acid biosynthesis; L-arginine biosynthesis; N(2)-acetyl-L-ornithine from L-glutamate: step 2/4. In terms of biological role, catalyzes the ATP-dependent phosphorylation of N-acetyl-L-glutamate. The protein is Acetylglutamate kinase of Cutibacterium acnes (strain DSM 16379 / KPA171202) (Propionibacterium acnes).